Here is a 358-residue protein sequence, read N- to C-terminus: Uroporphyrinogen decarboxylase (358 aa).

Residues 36–40 (RQAGR), Asp85, Tyr160, Ser215, and His338 contribute to the substrate site.

It belongs to the uroporphyrinogen decarboxylase family. In terms of assembly, homodimer.

It is found in the cytoplasm. It catalyses the reaction uroporphyrinogen III + 4 H(+) = coproporphyrinogen III + 4 CO2. Its pathway is porphyrin-containing compound metabolism; protoporphyrin-IX biosynthesis; coproporphyrinogen-III from 5-aminolevulinate: step 4/4. Catalyzes the decarboxylation of four acetate groups of uroporphyrinogen-III to yield coproporphyrinogen-III. The sequence is that of Uroporphyrinogen decarboxylase from Corynebacterium glutamicum (strain R).